Reading from the N-terminus, the 214-residue chain is Putative F-box protein At3g58910 (214 aa).

The region spanning 1 to 47 (MDRVSSLPDELLCHILSFLTTKETALTSLLSKREIIPLIKSVVFPTL) is the F-box domain.

The polypeptide is Putative F-box protein At3g58910 (Arabidopsis thaliana (Mouse-ear cress)).